The following is a 763-amino-acid chain: Phosphoglycerol transferase I (763 aa).

4 helical membrane passes run 1-21 (MSEL…AWKA), 26-46 (WWFA…ITLF), 77-97 (ILPG…LGWI), and 108-128 (FGYS…SPAF).

It belongs to the OpgB family.

Its subcellular location is the cell inner membrane. It carries out the reaction a phosphatidylglycerol + a membrane-derived-oligosaccharide D-glucose = a 1,2-diacyl-sn-glycerol + a membrane-derived-oligosaccharide 6-(glycerophospho)-D-glucose.. Its pathway is glycan metabolism; osmoregulated periplasmic glucan (OPG) biosynthesis. Transfers a phosphoglycerol residue from phosphatidylglycerol to the membrane-bound nascent glucan backbones. This chain is Phosphoglycerol transferase I, found in Escherichia coli O45:K1 (strain S88 / ExPEC).